A 263-amino-acid chain; its full sequence is 5'-nucleotidase SurE (263 aa).

4 residues coordinate a divalent metal cation: aspartate 21, aspartate 22, serine 52, and asparagine 105.

The protein belongs to the SurE nucleotidase family. Requires a divalent metal cation as cofactor.

The protein localises to the cytoplasm. The enzyme catalyses a ribonucleoside 5'-phosphate + H2O = a ribonucleoside + phosphate. Nucleotidase that shows phosphatase activity on nucleoside 5'-monophosphates. In Vibrio cholerae serotype O1 (strain ATCC 39541 / Classical Ogawa 395 / O395), this protein is 5'-nucleotidase SurE.